The primary structure comprises 2962 residues: Sex determination and dosage compensation protein sdc-2 (2962 aa).

Disordered stretches follow at residues 1 to 28 (MSDESELGNQSEMESFNESDSPDEADPD) and 1061 to 1110 (DKRS…QVDP). Acidic residues predominate over residues 15–27 (SFNESDSPDEADP). Coiled-coil stretches lie at residues 995 to 1085 (LESA…LADK) and 1140 to 1268 (REER…KRVS). 2 disordered regions span residues 1535–1554 (PASLNSEDSDSEDSREGSPV) and 2198–2227 (LDSSGSGRSTRCEIFEDSPSEDENDENQLD). Residues 2212–2225 (FEDSPSEDENDENQ) are compositionally biased toward acidic residues.

As to quaternary structure, component of the SDC complex, which consists of sdc-1, sdc-2 and sdc-3. Within the complex, interacts with sdc-1 and sdc-3. Expressed in hermaphrodites (XX), but absent in males (XO) (at protein level).

The protein localises to the chromosome. In terms of biological role, component of the SDC complex that functions in sex determination and in X chromosome dosage compensation specifically in hermaphrodite (XX) animals. Required for the recruitment of the condensin I-like dosage compensation complex to the male sex-determining autosomal gene her-1, thereby contributing to its repression and initiating hermaphrodite sexual development. Plays a central role in X-chromosome recognition and in the recruitment and assembly of the dosage compensation complex and the dosage compensation protein dpy-21 onto the X chromosomes in hermaphrodites, which leads to a reduction of X-linked gene transcription and an equalization of X-linked gene expression between the sexes. May confer protection against toxicity induced by heavy metals such as arsenite. The sequence is that of Sex determination and dosage compensation protein sdc-2 from Caenorhabditis elegans.